The primary structure comprises 152 residues: Large ribosomal subunit protein bL9 (152 aa).

The segment at 41 to 61 (QSAMSQLNAERKAEQRREAEE) is disordered. Residues 49 to 61 (AERKAEQRREAEE) show a composition bias toward basic and acidic residues.

Belongs to the bacterial ribosomal protein bL9 family.

Functionally, binds to the 23S rRNA. This chain is Large ribosomal subunit protein bL9, found in Levilactobacillus brevis (strain ATCC 367 / BCRC 12310 / CIP 105137 / JCM 1170 / LMG 11437 / NCIMB 947 / NCTC 947) (Lactobacillus brevis).